The chain runs to 137 residues: Nucleoside diphosphate kinase (137 aa).

Residues Lys9, Phe57, Arg85, Thr91, Arg102, and Asn112 each coordinate ATP. His115 serves as the catalytic Pros-phosphohistidine intermediate.

The protein belongs to the NDK family. In terms of assembly, homotetramer. Requires Mg(2+) as cofactor.

It localises to the cytoplasm. The enzyme catalyses a 2'-deoxyribonucleoside 5'-diphosphate + ATP = a 2'-deoxyribonucleoside 5'-triphosphate + ADP. It carries out the reaction a ribonucleoside 5'-diphosphate + ATP = a ribonucleoside 5'-triphosphate + ADP. Major role in the synthesis of nucleoside triphosphates other than ATP. The ATP gamma phosphate is transferred to the NDP beta phosphate via a ping-pong mechanism, using a phosphorylated active-site intermediate. The chain is Nucleoside diphosphate kinase from Aliarcobacter butzleri (strain RM4018) (Arcobacter butzleri).